Consider the following 239-residue polypeptide: Ribonuclease PH (239 aa).

Phosphate contacts are provided by residues Arg-87 and 125–127; that span reads GTR.

This sequence belongs to the RNase PH family. As to quaternary structure, homohexameric ring arranged as a trimer of dimers.

It carries out the reaction tRNA(n+1) + phosphate = tRNA(n) + a ribonucleoside 5'-diphosphate. In terms of biological role, phosphorolytic 3'-5' exoribonuclease that plays an important role in tRNA 3'-end maturation. Removes nucleotide residues following the 3'-CCA terminus of tRNAs; can also add nucleotides to the ends of RNA molecules by using nucleoside diphosphates as substrates, but this may not be physiologically important. Probably plays a role in initiation of 16S rRNA degradation (leading to ribosome degradation) during starvation. The sequence is that of Ribonuclease PH from Cyanothece sp. (strain PCC 7425 / ATCC 29141).